An 80-amino-acid polypeptide reads, in one-letter code: Defensin-like protein 50 (80 aa).

Residues Met1 to Ala27 form the signal peptide. 4 disulfides stabilise this stretch: Cys39-Cys79, Cys43-Cys66, Cys52-Cys77, and Cys56-Cys78.

It belongs to the DEFL family.

It localises to the secreted. This Arabidopsis thaliana (Mouse-ear cress) protein is Defensin-like protein 50 (LCR49).